The primary structure comprises 289 residues: MELRHLRYFKVLAETLNFTRAAELLHIAQPPLSRQISQLEDQLGTLLVVRERPLRLTEAGRFFYEQSCTVLQLQNISDNTRRIGQGQRQWLGIGFAPSTLYKVLPELIRELRQDSELELGLNEMTTLQQVEALKSGRIDIAFGRIRIDDPAIHQQVLCEDPLVAVLPKDHPLASSPLTLAQLAGEAFILYPANPRPSYADHVLALFAHHGMSIHVSQWANELQTAIGLVAVGVGVTLVPASVQQQHRTDIEYVSLLDSGAVSPIILSRRKGDVSPIVQRCLTLIAQQAE.

The region spanning 1 to 57 is the HTH lysR-type domain; that stretch reads MELRHLRYFKVLAETLNFTRAAELLHIAQPPLSRQISQLEDQLGTLLVVRERPLRLT. The H-T-H motif DNA-binding region spans 18-37; it reads FTRAAELLHIAQPPLSRQIS.

The protein belongs to the LysR transcriptional regulatory family.

Its subcellular location is the cytoplasm. Positive regulator of the catBC operon that degrades catechol to acetyl-CoA. CatR binds in trans to the catR-catBC promoter-control region in the presence or absence of inducer but only activates the catBC operon in the presence of the inducer, cis-cis-muconate. This chain is HTH-type transcriptional regulator CatR (catR), found in Pseudomonas putida (Arthrobacter siderocapsulatus).